The chain runs to 264 residues: Astacin-like metalloprotease toxin 1 (264 aa).

Residues 1–16 (MIKYIGVFAFLVGGFC) form the signal peptide. Residues 17-51 (HDFETVISNQDPIVDGMRLVEGDMLFDDGPLFTER) constitute a propeptide that is removed on maturation. The Peptidase M12A domain maps to 52–249 (NAVKYDQQLW…VKVNKLYKCP (198 aa)). Disulfide bonds link cysteine 93–cysteine 248 and cysteine 114–cysteine 135. Histidine 143 is a binding site for Zn(2+). Glutamate 144 is an active-site residue. Residues histidine 147 and histidine 153 each contribute to the Zn(2+) site. N-linked (GlcNAc...) asparagine glycosylation is found at asparagine 173 and asparagine 185.

Monomer. It depends on Zn(2+) as a cofactor. As to expression, expressed by the venom gland.

It localises to the secreted. Inhibited by 1,10-phenanthroline. Its function is as follows. Zinc metalloprotease. Provoques deadhesion of endothelial cells from cell cultures, and also degradation of fibronectin, fibrinogen and gelatin in vitro. Its role in the venom is not fully understood but it might act as a spreading factor that facilitates diffusion of other venom toxins. Alternatively, it might be involved in the proteolytic processing of other venom toxins or it might play a role in extra-oral digestion of prey. This Loxosceles intermedia (Brown spider) protein is Astacin-like metalloprotease toxin 1.